Reading from the N-terminus, the 231-residue chain is Flagellar L-ring protein (231 aa).

Residues 1–18 (MNRYVSVLALSGIAVLAG) form the signal peptide. Cys-19 carries the N-palmitoyl cysteine lipid modification. Cys-19 carries S-diacylglycerol cysteine lipidation.

The protein belongs to the FlgH family. The basal body constitutes a major portion of the flagellar organelle and consists of four rings (L,P,S, and M) mounted on a central rod.

The protein localises to the cell outer membrane. The protein resides in the bacterial flagellum basal body. In terms of biological role, assembles around the rod to form the L-ring and probably protects the motor/basal body from shearing forces during rotation. The protein is Flagellar L-ring protein of Pseudomonas fluorescens (strain SBW25).